A 457-amino-acid polypeptide reads, in one-letter code: Adenylosuccinate synthetase isozyme 1 (457 aa).

The interval 1-25 (MSGTRASNDRPPSAGGVKRGRLQHE) is disordered. Residues 42 to 48 (GDEGKGK) and 70 to 72 (GHT) each bind GTP. Asp-43 acts as the Proton acceptor in catalysis. Mg(2+) is bound by residues Asp-43 and Gly-70. Asp-43 contacts substrate. IMP contacts are provided by residues 43–46 (DEGK), 68–71 (NAGH), Thr-163, Arg-177, Asn-256, Thr-271, and Arg-335. His-71 (proton donor) is an active-site residue. 331–337 (VTTGRKR) serves as a coordination point for substrate. GTP is bound by residues Arg-337, 363–365 (KLD), and 445–448 (GVGK).

It belongs to the adenylosuccinate synthetase family. As to quaternary structure, homodimer. Mg(2+) serves as cofactor. As to expression, predominantly expressed in the striated muscle tissues.

It is found in the cytoplasm. The enzyme catalyses IMP + L-aspartate + GTP = N(6)-(1,2-dicarboxyethyl)-AMP + GDP + phosphate + 2 H(+). Its pathway is purine metabolism; AMP biosynthesis via de novo pathway; AMP from IMP: step 1/2. Component of the purine nucleotide cycle (PNC), which interconverts IMP and AMP to regulate the nucleotide levels in various tissues, and which contributes to glycolysis and ammoniagenesis. Catalyzes the first committed step in the biosynthesis of AMP from IMP. The sequence is that of Adenylosuccinate synthetase isozyme 1 from Sus scrofa (Pig).